The following is a 130-amino-acid chain: Small ribosomal subunit protein uS8 (130 aa).

Belongs to the universal ribosomal protein uS8 family. Part of the 30S ribosomal subunit.

In terms of biological role, one of the primary rRNA binding proteins, it binds directly to 16S rRNA central domain where it helps coordinate assembly of the platform of the 30S subunit. The sequence is that of Small ribosomal subunit protein uS8 from Thermococcus sibiricus (strain DSM 12597 / MM 739).